Consider the following 373-residue polypeptide: tRNA-specific 2-thiouridylase MnmA (373 aa).

ATP-binding positions include 12-19 (GMSGGVDS) and M38. Residues 98–100 (NPD) are interaction with target base in tRNA. C103 (nucleophile) is an active-site residue. C103 and C200 are oxidised to a cystine. G127 lines the ATP pocket. The interaction with tRNA stretch occupies residues 150 to 152 (KDQ). The Cysteine persulfide intermediate role is filled by C200. An interaction with tRNA region spans residues 312–313 (RY).

The protein belongs to the MnmA/TRMU family.

The protein localises to the cytoplasm. The enzyme catalyses S-sulfanyl-L-cysteinyl-[protein] + uridine(34) in tRNA + AH2 + ATP = 2-thiouridine(34) in tRNA + L-cysteinyl-[protein] + A + AMP + diphosphate + H(+). Catalyzes the 2-thiolation of uridine at the wobble position (U34) of tRNA, leading to the formation of s(2)U34. The sequence is that of tRNA-specific 2-thiouridylase MnmA from Streptococcus pyogenes serotype M28 (strain MGAS6180).